We begin with the raw amino-acid sequence, 77 residues long: MEFENQKFLVILITPMVLVLALDDFYVEEEFVINDKKLLRLVIEHIKEKGQIQKRKTQMPLIIHNTRYVLRHIKKYT.

The protein resides in the plastid. The protein localises to the cyanelle. This is an uncharacterized protein from Cyanophora paradoxa.